A 304-amino-acid chain; its full sequence is Light-independent protochlorophyllide reductase iron-sulfur ATP-binding protein (304 aa).

Residues 46–51 and lysine 75 contribute to the ATP site; that span reads GIGKST. Serine 50 is a Mg(2+) binding site. [4Fe-4S] cluster contacts are provided by cysteine 131 and cysteine 165. ATP-binding positions include 216 to 217 and 240 to 242; these read NR and PDL.

The protein belongs to the NifH/BchL/ChlL family. As to quaternary structure, homodimer. Protochlorophyllide reductase is composed of three subunits; BchL, BchN and BchB. Requires [4Fe-4S] cluster as cofactor.

The catalysed reaction is chlorophyllide a + oxidized 2[4Fe-4S]-[ferredoxin] + 2 ADP + 2 phosphate = protochlorophyllide a + reduced 2[4Fe-4S]-[ferredoxin] + 2 ATP + 2 H2O. The protein operates within porphyrin-containing compound metabolism; bacteriochlorophyll biosynthesis (light-independent). Its function is as follows. Component of the dark-operative protochlorophyllide reductase (DPOR) that uses Mg-ATP and reduced ferredoxin to reduce ring D of protochlorophyllide (Pchlide) to form chlorophyllide a (Chlide). This reaction is light-independent. The L component serves as a unique electron donor to the NB-component of the complex, and binds Mg-ATP. This chain is Light-independent protochlorophyllide reductase iron-sulfur ATP-binding protein, found in Rhodobacter capsulatus (strain ATCC BAA-309 / NBRC 16581 / SB1003).